We begin with the raw amino-acid sequence, 154 residues long: Transcription antitermination protein NusB (154 aa).

The protein belongs to the NusB family.

Its function is as follows. Involved in transcription antitermination. Required for transcription of ribosomal RNA (rRNA) genes. Binds specifically to the boxA antiterminator sequence of the ribosomal RNA (rrn) operons. The polypeptide is Transcription antitermination protein NusB (Oleidesulfovibrio alaskensis (strain ATCC BAA-1058 / DSM 17464 / G20) (Desulfovibrio alaskensis)).